The sequence spans 261 residues: Calbindin (261 aa).

Ala2 is modified (N-acetylalanine). Residues 2-7 are interaction with RANBP9; it reads AESHLQ. EF-hand domains are found at residues 11-46, 53-88, 98-133, 142-177, and 186-221; these read ITASQFFEIWLHFDADGSGYLEGKELQNLIQELQQA, ELSPEMKTFVDQYGQRDDGKIGIVELAHVLPTEENF, KSCEEFMKTWRKYDTDHSGFIETEELKNFLKDLLEK, KLAEYTDLMLKLFDSNNDGKLELTEMARLLPVQENF, and MCGKEFNKAFELYDQDGNGYIDENELDALLKDLCEK. Ca(2+) contacts are provided by Asp24, Asp26, Ser28, Tyr30, and Glu35. 14 residues coordinate Ca(2+): Asp111, Asp113, Ser115, Glu122, Asp155, Asn157, Asp159, Lys161, Glu166, Asp199, Asp201, Asn203, Tyr205, and Glu210.

This sequence belongs to the calbindin family. Interacts with RANBP9.

Functionally, buffers cytosolic calcium. May stimulate a membrane Ca(2+)-ATPase and a 3',5'-cyclic nucleotide phosphodiesterase. This Homo sapiens (Human) protein is Calbindin (CALB1).